The primary structure comprises 628 residues: Nucleoside-triphosphatase 1 (628 aa).

The signal sequence occupies residues 1–25 (MWLPVYVPLLLVFGVSLSLPQGSLG). Glu-236 serves as the catalytic Proton acceptor. Asn-432 carries an N-linked (GlcNAc...) asparagine glycan.

The protein belongs to the GDA1/CD39 NTPase family. Homotetramer.

It localises to the secreted. Its subcellular location is the parasitophorous vacuole. The catalysed reaction is a ribonucleoside 5'-triphosphate + H2O = a ribonucleoside 5'-diphosphate + phosphate + H(+). In terms of biological role, may perform an important processing step in the conversion of high energy nucleotides prior to uptake by the parasite and may contribute to intracellular survival and virulence. NTPAse-I has a specific activity 4.5-fold higher than NTPAse-II in hydrolysis of ATP. The primary difference between these isozymes lies in their ability to hydrolyze nucleoside triphosphate versus diphosphate substrates. While NTPAse-II hydrolyzes ATP to ADP and ADP to AMP at almost the same rate, NTPAse-I hydrolyzes ADP to AMP at a much slower rate (0.7% of the rate for ATP). In Toxoplasma gondii, this protein is Nucleoside-triphosphatase 1 (NTP3).